Reading from the N-terminus, the 353-residue chain is Protein Wnt-11b (353 aa).

Residues 1-22 (MAPTRHWVTPLLLLCCSGICGA) form the signal peptide. N-linked (GlcNAc...) asparagine glycans are attached at residues asparagine 31, asparagine 38, and asparagine 88. 5 disulfide bridges follow: cysteine 78-cysteine 89, cysteine 128-cysteine 136, cysteine 138-cysteine 155, cysteine 208-cysteine 222, and cysteine 210-cysteine 217. Serine 214 is lipidated: O-palmitoleoyl serine; by PORCN. Sulfotyrosine is present on residues tyrosine 274 and tyrosine 281. 6 disulfide bridges follow: cysteine 282-cysteine 313, cysteine 298-cysteine 308, cysteine 312-cysteine 352, cysteine 328-cysteine 343, cysteine 330-cysteine 340, and cysteine 335-cysteine 336. An N-linked (GlcNAc...) asparagine glycan is attached at asparagine 299.

This sequence belongs to the Wnt family. In terms of assembly, homodimer. Secreted homodimers form a complex with wnt5a homodimers; tyrosine sulfation of both wnt11 and wnt5a by tpst1 is required for this interaction. Interacts with the transmembrane receptor fzd7/fz7. Interacts with lrp6 and ryk. Interacts with tdgf1/frl1. Interacts weakly with frzb1 and strongly with frzb2/crescent. Interaction with frzb2/crescent antagonizes wnt11 function in the neuroectoderm, but enhances it in mesodermal tissue. In terms of processing, glycosylation is required for protein secretion. Palmitoleoylation is required for efficient binding to frizzled receptors. Depalmitoleoylation leads to Wnt signaling pathway inhibition. Transcripts are expressed ubiquitously in early oocytes but become vegetally localized during mid-oogenesis then enriched on the dorsal side by the 8 to 16 cell stage. The protein becomes asymmetrically concentrated on the dorsal side by the 64-cell stage. During gastrulation, expressed in the lateral and ventral marginal zone, and during tadpole stages in the somites and first branchial arch. Weakly expressed in the pronephros from at least stage 12.5, with kidney expression increasing until stage 35. Expressed in the prospective posterior gut between stages 13 and 20, and in the deep foregut endoderm. Prior to neural crest cell migration, expressed in a domain flanking the neural crest on the lateral or epidermal side (the opposite side to wnt11/wnt11-r).

The protein resides in the secreted. The protein localises to the extracellular space. Its subcellular location is the extracellular matrix. In terms of biological role, ligand for the frizzled7 transmembrane receptor. Primarily acts via non-canonical Wnt pathways mediated by either Ca(2+) and PKC, or by JNK and dvl2/dsh. Depending on the cellular context, can also signal via the canonical Wnt pathway mediated by beta-catenin and dvl2/dsh. May also inhibit canonical Wnt signaling. Maternally initiates dorsal/ventral axis formation by a canonical route, which signals via lrp6. In a complex with wnt5a, activates the canonical and non-canonical processes involved in axis formation. In the non-canonical pathway, acts through fzd7/fz7 to induce phosphorylation of dvl2/dsh. Signals through a non-canonical Wnt pathway to regulate convergent extension movements during gastrulation. Interactions with the secreted Wnt antagonist sfrp5 to coordinate foregut development, acting via a non-canonical Wnt pathway whereby sfrp5 restricts wnt11b activity to prevent inappropriate foregut formation. Mediates cardiogenesis via non-canonical Wnt signaling involving JNK-activation and PKC. Acts redundantly with wnt11/wnt11r during pronephros induction. The polypeptide is Protein Wnt-11b (wnt11b) (Xenopus laevis (African clawed frog)).